The primary structure comprises 768 residues: Cullin-3 (768 aa).

Position 2 is an N-acetylserine (Ser2). The interaction with KLHL18 stretch occupies residues 2–41 (SNLSKGTGSRKDTKMRIRAFPMTMDEKYVNSIWDLLKNAI). Phosphoserine is present on Ser585. A disordered region spans residues 677–698 (VAAKQGESDPERKETRQKVDDD). Residues 682–698 (GESDPERKETRQKVDDD) show a composition bias toward basic and acidic residues. A Cullin neddylation domain is found at 698 to 760 (DRKHEIEAAI…REYLARTPED (63 aa)). Lys712 is covalently cross-linked (Glycyl lysine isopeptide (Lys-Gly) (interchain with G-Cter in NEDD8)).

Belongs to the cullin family. In terms of assembly, forms neddylation-dependent homodimers. Component of multiple BCR (BTB-CUL3-RBX1) E3 ubiquitin-protein ligase complexes formed of CUL3, RBX1 and a variable BTB domain-containing protein acting as both, adapter to cullin and substrate recognition subunit. The BCR complex may be active as a heterodimeric complex, in which NEDD8, covalently attached to one CUL3 molecule, binds to the C-terminus of a second CUL3 molecule. Interacts with RBX1, RNF7, CYCE and TIP120A/CAND1. Part of the BCR(SPOP) containing SPOP, and of BCR containing homodimeric SPOPL or the heterodimer formed by SPOP and SPOPL. Part of the probable BCR(KLHL9-KLHL13) complex with BTB domain proteins KLHL9 and KLHL13. Part of the BCR(KLHL41) complex containing KLHL41. Component of the BCR(KLHL12) E3 ubiquitin ligase complex, at least composed of CUL3 and KLHL12 and RBX1. Component of the BCR(KLHL3) E3 ubiquitin ligase complex, at least composed of CUL3 and KLHL3 and RBX1. Part of the BCR(ENC1) complex containing ENC1. Part of a complex consisting of BMI1/PCGF4, CUL3 and SPOP. Part of a complex consisting of BRMS1, CUL3 and SPOP. Component of the BCR(KLHL21) E3 ubiquitin ligase complex, at least composed of CUL3, KLHL21 and RBX1. Component of the BCR(KLHL22) E3 ubiquitin ligase complex, at least composed of CUL3, KLHL22 and RBX1. Component of the BCR(KLHL25) E3 ubiquitin ligase complex, at least composed of CUL3, KLHL25 and RBX1. Part of a complex consisting of MACROH2A1, CUL3 and SPOP. Component of the BCR(KLHL42) E3 ubiquitin ligase complex, at least composed of CUL3 and KLHL42. Interacts with KLHL42 (via the BTB domain). Interacts with KATNA1; the interaction is enhanced by KLHL42. Component of the BCR(KBTBD8) E3 ubiquitin ligase complex, at least composed of CUL3, KBTBD8 and RBX1. Interacts with KCTD5, KLHL9, KLHL11, KLHL13, GAN, ZBTB16, KLHL3, KLHL15, KLHL20, KLHL36, GMCL2, BTBD1. Part of a complex that contains CUL3, RBX1 and GAN. Interacts (via BTB domain) with KLHL17; the interaction regulates surface GRIK2 expression. Interacts with KCTD7. Part of the BCR(GAN) complex containing GAN. Part of the BCR(KEAP1) complex containing KEAP1. Interacts with KLHL10. Interacts with KAT5 and ATF2. Interacts with KCTD17 in the BCR(KCTD17) E3 ubiquitin ligase complex, at least composed of CUL3, KCTD17 and RBX1. Interacts (when neddylated) with ARIH1; leading to activate the E3 ligase activity of ARIH1. Interacts with COPS9 isoform 2. Interacts with PPP2R5B; this interaction is indirect and mediated through KLHL15-binding and leads to PPP2R5B proteasomal degradation. Interacts with RBBP8/CtIP; this interaction is indirect and mediated through KLHL15-binding and leads to RBBP8 proteasomal degradation. Interacts with KLHL24 in the BCR(KLHL24) E3 ubiquitin ligase complex, composed of CUL3, RBX1 and KLHL24. Interacts with RHOBTB2. Interacts with AURKA and KLHL18 (via BTB domain). Interacts (unneddylated form) with DCUN1D1, DCUN1D2, DCUN1D3, DCUN1D4 and DCUN1D5; these interactions promote the cullin neddylation. Component of a BCR3 (BTB-CUL3-RBX1) E3 ubiquitin ligase complex, also named Cul3-RING ubiquitin ligase complex CUL3(KBTBD6/7), composed of CUL3, RBX1, KBTBD6 and KBTBD7. Component of the BCR(KBTBD2) E3 ubiquitin ligase complex, at least composed of CUL3, KBTBD2 and RBX1. Interacts with KBTBD2 (via the BTB domain). Component of the BCR(KBTBD4) E3 ubiquitin ligase complex, at least composed of CUL3, KBTBD4 and RBX1. Component of the BCR(ARMC5) E3 ubiquitin ligase complex, composed of CUL3, ARMC5 and RBX1. In terms of processing, neddylated. Attachment of NEDD8 is required for the E3 ubiquitin-protein ligase activity of the BCR complex. Deneddylated via its interaction with the COP9 signalosome (CSN) complex. As to expression, brain, spermatozoa, and testis (at protein level). Widely expressed.

It is found in the nucleus. It localises to the golgi apparatus. The protein localises to the cell projection. Its subcellular location is the cilium. The protein resides in the flagellum. It is found in the cytoplasm. It localises to the cytoskeleton. The protein localises to the spindle. Its subcellular location is the microtubule organizing center. The protein resides in the centrosome. It is found in the spindle pole. The protein operates within protein modification; protein ubiquitination. Core component of multiple cullin-RING-based BCR (BTB-CUL3-RBX1) E3 ubiquitin-protein ligase complexes which mediate the ubiquitination and subsequent proteasomal degradation of target proteins. BCR complexes and ARIH1 collaborate in tandem to mediate ubiquitination of target proteins. As a scaffold protein may contribute to catalysis through positioning of the substrate and the ubiquitin-conjugating enzyme. The E3 ubiquitin-protein ligase activity of the complex is dependent on the neddylation of the cullin subunit and is inhibited by the association of the deneddylated cullin subunit with TIP120A/CAND1. The functional specificity of the BCR complex depends on the BTB domain-containing protein as the substrate recognition component. BCR(KLHL42) is involved in ubiquitination of KATNA1. BCR(SPOP) is involved in ubiquitination of BMI1/PCGF4, BRMS1, MACROH2A1 and DAXX, GLI2 and GLI3. Can also form a cullin-RING-based BCR (BTB-CUL3-RBX1) E3 ubiquitin-protein ligase complex containing homodimeric SPOPL or the heterodimer formed by SPOP and SPOPL; these complexes have lower ubiquitin ligase activity. BCR(KLHL9-KLHL13) controls the dynamic behavior of AURKB on mitotic chromosomes and thereby coordinates faithful mitotic progression and completion of cytokinesis. BCR(KLHL12) is involved in ER-Golgi transport by regulating the size of COPII coats, thereby playing a key role in collagen export, which is required for embryonic stem (ES) cells division: BCR(KLHL12) acts by mediating monoubiquitination of SEC31 (SEC31A or SEC31B). BCR(KLHL3) acts as a regulator of ion transport in the distal nephron; by mediating ubiquitination of WNK4. The BCR(KLHL20) E3 ubiquitin ligase complex is involved in interferon response and anterograde Golgi to endosome transport: it mediates both ubiquitination leading to degradation and 'Lys-33'-linked ubiquitination. The BCR(KLHL21) E3 ubiquitin ligase complex regulates localization of the chromosomal passenger complex (CPC) from chromosomes to the spindle midzone in anaphase and mediates the ubiquitination of AURKB. The BCR(KLHL22) ubiquitin ligase complex mediates monoubiquitination of PLK1, leading to PLK1 dissociation from phosphoreceptor proteins and subsequent removal from kinetochores, allowing silencing of the spindle assembly checkpoint (SAC) and chromosome segregation. The BCR(KLHL22) ubiquitin ligase complex is also responsible for the amino acid-stimulated 'Lys-48' polyubiquitination and proteasomal degradation of DEPDC5. Through the degradation of DEPDC5, releases the GATOR1 complex-mediated inhibition of the TORC1 pathway. The BCR(KLHL25) ubiquitin ligase complex is involved in translational homeostasis by mediating ubiquitination and subsequent degradation of hypophosphorylated EIF4EBP1 (4E-BP1). The BCR(KLHL25) ubiquitin ligase complex is also involved in lipid synthesis by mediating ubiquitination and degradation of ACLY. The BCR(KBTBD8) complex acts by mediating monoubiquitination of NOLC1 and TCOF1, leading to remodel the translational program of differentiating cells in favor of neural crest specification. Involved in ubiquitination of cyclin E and of cyclin D1 (in vitro) thus involved in regulation of G1/S transition. Involved in the ubiquitination of KEAP1, ENC1 and KLHL41. In concert with ATF2 and RBX1, promotes degradation of KAT5 thereby attenuating its ability to acetylate and activate ATM. The BCR(KCTD17) E3 ubiquitin ligase complex mediates ubiquitination and degradation of TCHP, a down-regulator of cilium assembly, thereby inducing ciliogenesis. The BCR(KLHL24) E3 ubiquitin ligase complex mediates ubiquitination of KRT14, controls KRT14 levels during keratinocytes differentiation, and is essential for skin integrity. The BCR(KLHL18) E3 ubiquitin ligase complex mediates the ubiquitination of AURKA leading to its activation at the centrosome which is required for initiating mitotic entry. The BCR(KEAP1) E3 ubiquitin ligase complex acts as a key sensor of oxidative and electrophilic stress by mediating ubiquitination and degradation of NFE2L2/NRF2, a transcription factor regulating expression of many cytoprotective genes. As part of the CUL3(KBTBD6/7) E3 ubiquitin ligase complex functions mediates 'Lys-48' ubiquitination and proteasomal degradation of TIAM1. By controlling the ubiquitination of that RAC1 guanine exchange factors (GEF), regulates RAC1 signal transduction and downstream biological processes including the organization of the cytoskeleton, cell migration and cell proliferation. The BCR(KBTBD4) E3 ubiquitin ligase complex targets CoREST corepressor complex components RCOR1, KDM1A/LSD1 and HDAC2 for proteasomal degradation with RCOR1 likely to be the primary target while degradation of KDM1A and HDAC2 is likely due to their association with RCOR1. It also targets RCOR3, MIER2 and MIER3 for proteasomal degradation as well as associated proteins ZNF217 and RREB1 with degradation being dependent on the presence of an ELM2 domain in the target proteins. The BCR(ARMC5) complex mediates premature transcription termination of transcripts that are unfavorably configured for transcriptional elongation by mediating ubiquitination of Pol II subunit POLR2A. Required for 'Lys-63'-linked ubiquitination of large ribosomal subunit protein MRPL12. The chain is Cullin-3 from Homo sapiens (Human).